The chain runs to 1420 residues: DNA-directed RNA polymerase subunit beta' (1420 aa).

The Zn(2+) site is built by cysteine 71, cysteine 73, cysteine 86, and cysteine 89. The Mg(2+) site is built by aspartate 461, aspartate 463, and aspartate 465. Positions 815, 889, 896, and 899 each coordinate Zn(2+).

It belongs to the RNA polymerase beta' chain family. As to quaternary structure, the RNAP catalytic core consists of 2 alpha, 1 beta, 1 beta' and 1 omega subunit. When a sigma factor is associated with the core the holoenzyme is formed, which can initiate transcription. Mg(2+) is required as a cofactor. Zn(2+) serves as cofactor.

The enzyme catalyses RNA(n) + a ribonucleoside 5'-triphosphate = RNA(n+1) + diphosphate. In terms of biological role, DNA-dependent RNA polymerase catalyzes the transcription of DNA into RNA using the four ribonucleoside triphosphates as substrates. The polypeptide is DNA-directed RNA polymerase subunit beta' (Histophilus somni (strain 129Pt) (Haemophilus somnus)).